The chain runs to 430 residues: WD repeat-containing protein jip5 (430 aa).

WD repeat units follow at residues 9–48, 72–111, 117–158, 215–262, 272–318, and 323–360; these read PLSS…AAAE, RHKG…VTSK, TNTD…SFKS, DQEE…DQSE, AGGE…GVVE, and DDIE…EEEE. The span at 356–374 shows a compositional bias: acidic residues; the sequence is EEEEEEEEEEQEDIEDNDD. The tract at residues 356 to 430 is disordered; it reads EEEEEEEEEE…NGILKFKGME (75 aa). Residues 382 to 397 show a composition bias toward basic and acidic residues; that stretch reads HALERDSDDSDARADS. The span at 405-416 shows a compositional bias: basic residues; that stretch reads RKKRKKKKKGKK.

The protein belongs to the WD repeat WDR55 family.

The protein localises to the nucleus. The protein resides in the nucleolus. This Botryotinia fuckeliana (strain B05.10) (Noble rot fungus) protein is WD repeat-containing protein jip5 (jip5).